A 551-amino-acid chain; its full sequence is Sialic acid-binding Ig-like lectin 5 (551 aa).

Residues 1-16 (MLPLLLLPLLWGGSLQ) form the signal peptide. At 17–441 (EKPVYELQVQ…LGTGVVPAAL (425 aa)) the chain is on the extracellular side. One can recognise an Ig-like V-type domain in the interval 19–136 (PVYELQVQKS…KYSYQQNKLN (118 aa)). Disulfide bonds link Cys36–Cys170, Cys41–Cys101, and Cys164–Cys213. The N-linked (GlcNAc...) asparagine glycan is linked to Asn100. N-acetylneuraminate is bound by residues Arg119, Lys127, and Ser129. Residues 146–229 (PDIHFLEPLE…AQVTTERTVQ (84 aa)) enclose the Ig-like C2-type 1 domain. Residues 189 to 210 (DPETTRSSELTLTPRPEDHGTN) are disordered. Residues Asn210, Asn231, and Asn253 are each glycosylated (N-linked (GlcNAc...) asparagine). The region spanning 236 to 330 (PQTITIFRNG…GFLQIFLNLS (95 aa)) is the Ig-like C2-type 2 domain. Cysteines 269 and 314 form a disulfide. N-linked (GlcNAc...) asparagine glycans are attached at residues Asn328, Asn375, Asn384, and Asn393. The chain crosses the membrane as a helical span at residues 442-462 (GGAGVMALLCICLCLIFFLIV). Over 463–551 (KARRKQAAGR…TEYSEIKTSK (89 aa)) the chain is Cytoplasmic. The segment at 469 to 551 (AAGRPEKMDD…TEYSEIKTSK (83 aa)) is disordered. Residues 518 to 523 (LHYASL) carry the ITIM motif motif. Positions 528–537 (MKSREPKDQE) are enriched in basic and acidic residues. The SLAM-like motif motif lies at 542–547 (TEYSEI).

This sequence belongs to the immunoglobulin superfamily. SIGLEC (sialic acid binding Ig-like lectin) family. As to expression, expressed by monocytic/myeloid lineage cells. Found at high levels in peripheral blood leukocytes, spleen, bone marrow and at lower levels in lymph node, lung, appendix, placenta, pancreas and thymus. Expressed by monocytes and neutrophils but absent from leukemic cell lines representing early stages of myelomonocytic differentiation.

It localises to the membrane. Functionally, putative adhesion molecule that mediates sialic-acid dependent binding to cells. Binds equally to alpha-2,3-linked and alpha-2,6-linked sialic acid. The sialic acid recognition site may be masked by cis interactions with sialic acids on the same cell surface. The chain is Sialic acid-binding Ig-like lectin 5 (SIGLEC5) from Homo sapiens (Human).